Consider the following 616-residue polypeptide: Dihydroxy-acid dehydratase (616 aa).

Residue D81 participates in Mg(2+) binding. Residue C122 coordinates [2Fe-2S] cluster. Mg(2+) is bound by residues D123 and K124. Residue K124 is modified to N6-carboxylysine. [2Fe-2S] cluster is bound at residue C195. E491 is a Mg(2+) binding site. The active-site Proton acceptor is S517.

It belongs to the IlvD/Edd family. Homodimer. It depends on [2Fe-2S] cluster as a cofactor. Mg(2+) is required as a cofactor.

The enzyme catalyses (2R)-2,3-dihydroxy-3-methylbutanoate = 3-methyl-2-oxobutanoate + H2O. It carries out the reaction (2R,3R)-2,3-dihydroxy-3-methylpentanoate = (S)-3-methyl-2-oxopentanoate + H2O. The protein operates within amino-acid biosynthesis; L-isoleucine biosynthesis; L-isoleucine from 2-oxobutanoate: step 3/4. It functions in the pathway amino-acid biosynthesis; L-valine biosynthesis; L-valine from pyruvate: step 3/4. Functionally, functions in the biosynthesis of branched-chain amino acids. Catalyzes the dehydration of (2R,3R)-2,3-dihydroxy-3-methylpentanoate (2,3-dihydroxy-3-methylvalerate) into 2-oxo-3-methylpentanoate (2-oxo-3-methylvalerate) and of (2R)-2,3-dihydroxy-3-methylbutanoate (2,3-dihydroxyisovalerate) into 2-oxo-3-methylbutanoate (2-oxoisovalerate), the penultimate precursor to L-isoleucine and L-valine, respectively. This is Dihydroxy-acid dehydratase from Salmonella gallinarum (strain 287/91 / NCTC 13346).